The following is a 348-amino-acid chain: UDP-glucose 4-epimerase (348 aa).

Residues 12-14, 33-37, 66-67, Phe-88, and Lys-92 contribute to the NAD(+) site; these read GYI, DNFHN, and DI. 132–134 provides a ligand contact to substrate; sequence SAT. Tyr-157 (proton acceptor) is an active-site residue. Residues Lys-161 and Tyr-185 each contribute to the NAD(+) site. Residues 185-187, 206-208, 224-226, Arg-239, and 300-303 contribute to the substrate site; these read YFN, NNL, NVF, and REGD.

The protein belongs to the NAD(P)-dependent epimerase/dehydratase family. As to quaternary structure, homodimer. The cofactor is NAD(+).

It catalyses the reaction UDP-alpha-D-glucose = UDP-alpha-D-galactose. The enzyme catalyses UDP-N-acetyl-alpha-D-glucosamine = UDP-N-acetyl-alpha-D-galactosamine. The protein operates within carbohydrate metabolism; galactose metabolism. Functionally, catalyzes two distinct but analogous reactions: the reversible epimerization of UDP-glucose to UDP-galactose and the reversible epimerization of UDP-N-acetylglucosamine to UDP-N-acetylgalactosamine. The reaction with UDP-Gal plays a critical role in the Leloir pathway of galactose catabolism in which galactose is converted to the glycolytic intermediate glucose 6-phosphate. It contributes to the catabolism of dietary galactose and enables the endogenous biosynthesis of both UDP-Gal and UDP-GalNAc when exogenous sources are limited. Both UDP-sugar interconversions are important in the synthesis of glycoproteins and glycolipids. This is UDP-glucose 4-epimerase (GALE) from Pongo abelii (Sumatran orangutan).